The primary structure comprises 159 residues: Crossover junction endodeoxyribonuclease RuvC (159 aa).

Residues aspartate 7, glutamate 67, and aspartate 139 contribute to the active site. Positions 7, 67, and 139 each coordinate Mg(2+).

It belongs to the RuvC family. Homodimer which binds Holliday junction (HJ) DNA. The HJ becomes 2-fold symmetrical on binding to RuvC with unstacked arms; it has a different conformation from HJ DNA in complex with RuvA. In the full resolvosome a probable DNA-RuvA(4)-RuvB(12)-RuvC(2) complex forms which resolves the HJ. Mg(2+) serves as cofactor.

The protein localises to the cytoplasm. The catalysed reaction is Endonucleolytic cleavage at a junction such as a reciprocal single-stranded crossover between two homologous DNA duplexes (Holliday junction).. Functionally, the RuvA-RuvB-RuvC complex processes Holliday junction (HJ) DNA during genetic recombination and DNA repair. Endonuclease that resolves HJ intermediates. Cleaves cruciform DNA by making single-stranded nicks across the HJ at symmetrical positions within the homologous arms, yielding a 5'-phosphate and a 3'-hydroxyl group; requires a central core of homology in the junction. The consensus cleavage sequence is 5'-(A/T)TT(C/G)-3'. Cleavage occurs on the 3'-side of the TT dinucleotide at the point of strand exchange. HJ branch migration catalyzed by RuvA-RuvB allows RuvC to scan DNA until it finds its consensus sequence, where it cleaves and resolves the cruciform DNA. In Orientia tsutsugamushi (strain Boryong) (Rickettsia tsutsugamushi), this protein is Crossover junction endodeoxyribonuclease RuvC.